The sequence spans 286 residues: ATP synthase gamma chain (286 aa).

The protein belongs to the ATPase gamma chain family. As to quaternary structure, F-type ATPases have 2 components, CF(1) - the catalytic core - and CF(0) - the membrane proton channel. CF(1) has five subunits: alpha(3), beta(3), gamma(1), delta(1), epsilon(1). CF(0) has three main subunits: a, b and c.

Its subcellular location is the cell inner membrane. Produces ATP from ADP in the presence of a proton gradient across the membrane. The gamma chain is believed to be important in regulating ATPase activity and the flow of protons through the CF(0) complex. This is ATP synthase gamma chain from Shewanella baltica (strain OS223).